Here is a 747-residue protein sequence, read N- to C-terminus: DNA repair and recombination protein RAD54-like (747 aa).

The disordered stretch occupies residues 1–41; sequence MRRSLAPSQLAKRKPEGRSCDDEDWQPGLVTPRKRKSSSET. A required for chromatin remodeling, strand pairing activities and coupling of ATPase activity region spans residues 2–9; sequence RRSLAPSQ. The residue at position 38 (Ser38) is a Phosphoserine. The 176-residue stretch at 170 to 345 folds into the Helicase ATP-binding domain; that stretch reads SRRIPGSHGC…FSLVHFVNSG (176 aa). Position 183-190 (183-190) interacts with ATP; that stretch reads DEMGLGKT. Residues 296–299 carry the DEGH box motif; the sequence is DEGH. One can recognise a Helicase C-terminal domain in the interval 500 to 653; the sequence is VLDYILAVTR…CVVDEEQDVE (154 aa). Lys515 is subject to N6-acetyllysine. A Phosphoserine; by NEK1 modification is found at Ser572.

Belongs to the SNF2/RAD54 helicase family. In terms of assembly, homohexamer. Interacts (via N-terminus) with RAD51. Interacts with NAP1L1. Interacts with BRD9; this interaction orchestrates RAD51-RAD54 complex formation. Post-translationally, acetylated. Acetylation promotes interaction with BRD9, and subsequently with RAD54, which is essential for homologous recombination (HR). Phosphorylated. Phosphorylation at Ser-572 by NEK1 specifically in G2 phase allows efficient removal of RAD51 filaments from DNA.

The protein resides in the nucleus. The enzyme catalyses ATP + H2O = ADP + phosphate + H(+). Functionally, plays an essential role in homologous recombination (HR) which is a major pathway for repairing DNA double-strand breaks (DSBs), single-stranded DNA (ssDNA) gaps, and stalled or collapsed replication forks. Acts as a molecular motor during the homology search and guides RAD51 ssDNA along a donor dsDNA thereby changing the homology search from the diffusion-based mechanism to a motor-guided mechanism. Also plays an essential role in RAD51-mediated synaptic complex formation which consists of three strands encased in a protein filament formed once homology is recognized. Once DNA strand exchange occured, dissociates RAD51 from nucleoprotein filaments formed on dsDNA. This Homo sapiens (Human) protein is DNA repair and recombination protein RAD54-like (RAD54L).